A 215-amino-acid polypeptide reads, in one-letter code: Sodium channel regulatory subunit beta-3 (215 aa).

An N-terminal signal peptide occupies residues 1–22; it reads MPAFNRLFPLASLVLIYWVSVC. The Extracellular segment spans residues 23–156; sequence FPVCVEVPSE…EEAGEDFTSV (134 aa). 2 disulfides stabilise this stretch: cysteine 26-cysteine 48 and cysteine 45-cysteine 120. One can recognise an Ig-like C2-type domain in the interval 32–154; it reads ETEAVQGNPM…VTEEAGEDFT (123 aa). Residues asparagine 95, asparagine 109, asparagine 113, and asparagine 121 are each glycosylated (N-linked (GlcNAc...) asparagine). Residues 157–178 form a helical membrane-spanning segment; it reads VSEIMMYILLVFLTLWLLIEMI. At 179–215 the chain is on the cytoplasmic side; that stretch reads YCYRKVSKAEEAAQENASDYLAIPSENKENSAVPVEE.

This sequence belongs to the sodium channel auxiliary subunit SCN3B (TC 8.A.17) family. A voltage-gated sodium (Nav) channel consists of an ion-conducting pore-forming alpha subunit functional on its own that is regulated by one or more beta subunits. Forms homodimers and homotrimers. SCN3B is non-covalently associated with alpha subunits and induces the formation of alpha subunit oligomers, including trimers. Interacts with SCN5A/Nav1.5; regulatory subunit of SCN5A/Nav1.5. Interacts with SCN7A/Nav2.1; probable regulatory subunit of SCN7A/Nav2.1. Interacts with SCN10A; regulatory subunit of SCN10A/Nav1.8. Interacts with NFASC; probably involved in targeting the sodium channels to the nodes of Ranvier. Post-translationally, intramolecular disulfide bonds favor the voltage-gated sodium channel oligomeric complex assembly. In terms of processing, N-glycosylated. As to expression, expressed in the atrium.

It is found in the cell membrane. In terms of biological role, regulatory subunit of multiple voltage-gated sodium (Nav) channels directly mediating the depolarization of excitable membranes. Navs, also called VGSCs (voltage-gated sodium channels) or VDSCs (voltage-dependent sodium channels), operate by switching between closed and open conformations depending on the voltage difference across the membrane. In the open conformation they allow Na(+) ions to selectively pass through the pore, along their electrochemical gradient. The influx of Na+ ions provokes membrane depolarization, initiating the propagation of electrical signals throughout cells and tissues. The accessory beta subunits participate in localization and functional modulation of the Nav channels. Modulates the activity of SCN2A/Nav1.2, causing a hyperpolarizing shift in the voltage-dependence of inactivation of the channel and increasing the fraction of channels operating in the fast gating mode. Modulates the activity of SCN5A/Nav1.5. Could also regulate the atypical sodium channel SCN7A/Nav2.1. Modulates the activity of SCN10A/Nav1.8, regulating its oligomerization and accelerating the recovery from inactivation. The protein is Sodium channel regulatory subunit beta-3 of Homo sapiens (Human).